Reading from the N-terminus, the 99-residue chain is Acylphosphatase-1 (99 aa).

Ala-2 carries the post-translational modification N-acetylalanine. Residues 9–99 form the Acylphosphatase-like domain; the sequence is SVDYEVSGRV…LEHTDFQIRK (91 aa). Residues Arg-24 and Asn-42 contribute to the active site.

Belongs to the acylphosphatase family. As to expression, organ-common type isozyme is found in many different tissues.

The enzyme catalyses an acyl phosphate + H2O = a carboxylate + phosphate + H(+). This chain is Acylphosphatase-1 (ACYP1), found in Gallus gallus (Chicken).